An 873-amino-acid polypeptide reads, in one-letter code: Probable beta-glucosidase A (873 aa).

Positions 1-19 (MRFGWLEVAALTAASVANA) are cleaved as a signal peptide. Residues asparagine 71, asparagine 222, and asparagine 263 are each glycosylated (N-linked (GlcNAc...) asparagine). Residue aspartate 291 is part of the active site. Residues asparagine 326, asparagine 333, asparagine 365, asparagine 453, asparagine 534, asparagine 553, asparagine 575, asparagine 679, and asparagine 725 are each glycosylated (N-linked (GlcNAc...) asparagine). The tract at residues 731-764 (DSSDDPNYGWEDSEYIPEGARDGSPQPLLKAGGA) is disordered.

The protein belongs to the glycosyl hydrolase 3 family.

It localises to the secreted. The enzyme catalyses Hydrolysis of terminal, non-reducing beta-D-glucosyl residues with release of beta-D-glucose.. The protein operates within glycan metabolism; cellulose degradation. Functionally, beta-glucosidases are one of a number of cellulolytic enzymes involved in the degradation of cellulosic biomass. Catalyzes the last step releasing glucose from the inhibitory cellobiose. The chain is Probable beta-glucosidase A (bglA) from Aspergillus fumigatus (strain CBS 144.89 / FGSC A1163 / CEA10) (Neosartorya fumigata).